The primary structure comprises 345 residues: S-adenosylmethionine:tRNA ribosyltransferase-isomerase (345 aa).

Belongs to the QueA family. In terms of assembly, monomer.

The protein localises to the cytoplasm. It carries out the reaction 7-aminomethyl-7-carbaguanosine(34) in tRNA + S-adenosyl-L-methionine = epoxyqueuosine(34) in tRNA + adenine + L-methionine + 2 H(+). It participates in tRNA modification; tRNA-queuosine biosynthesis. Functionally, transfers and isomerizes the ribose moiety from AdoMet to the 7-aminomethyl group of 7-deazaguanine (preQ1-tRNA) to give epoxyqueuosine (oQ-tRNA). In Helicobacter pylori (strain G27), this protein is S-adenosylmethionine:tRNA ribosyltransferase-isomerase.